We begin with the raw amino-acid sequence, 235 residues long: Uridylate kinase (235 aa).

Residue Lys12–Gly15 participates in ATP binding. Residue Gly54 participates in UMP binding. Positions 55 and 59 each coordinate ATP. UMP-binding positions include Asp72 and Thr133–Thr140. Residues Tyr166 and Asp169 each coordinate ATP.

The protein belongs to the UMP kinase family. As to quaternary structure, homohexamer.

The protein resides in the cytoplasm. The enzyme catalyses UMP + ATP = UDP + ADP. Its pathway is pyrimidine metabolism; CTP biosynthesis via de novo pathway; UDP from UMP (UMPK route): step 1/1. Inhibited by UTP. Functionally, catalyzes the reversible phosphorylation of UMP to UDP. This is Uridylate kinase from Acetivibrio thermocellus (strain ATCC 27405 / DSM 1237 / JCM 9322 / NBRC 103400 / NCIMB 10682 / NRRL B-4536 / VPI 7372) (Clostridium thermocellum).